Consider the following 166-residue polypeptide: Large ribosomal subunit protein mL49 (166 aa).

A disordered region spans residues 54-77 (PTKIPEPPKHKHYPTPSGWQPPRD).

It belongs to the mitochondrion-specific ribosomal protein mL49 family. In terms of assembly, component of the mitochondrial ribosome large subunit (39S) which comprises a 16S rRNA and about 50 distinct proteins. Interacts with OXA1L.

It is found in the mitochondrion. In Mus musculus (Mouse), this protein is Large ribosomal subunit protein mL49 (Mrpl49).